Consider the following 162-residue polypeptide: MSGSSLRIVVPALLVIVGSVPVSLPAHAADGTIVVQRQVQPRVAYRPSMVPDPHPTVVDTNVSAEVNALANGAASGNTVSRELGDADFAIVTSGSGIRSMILTGSALPGFASQPANPATVQAVGNLGTTHGAGGGAGAGLAGQINGSLKQGLAPLQMLGGGQ.

The signal sequence occupies residues 1 to 28 (MSGSSLRIVVPALLVIVGSVPVSLPAHA).

This sequence belongs to the FapA family. Monomer in solution. Interacts with FapC but not FapB in vitro.

It is found in the periplasm. Functionally, an intrinsically disordered chaperone for fibril amyloid FapC that guards against fibrillation within the periplasm. Upon overexpression of the endogenous six-gene locus (fapA-fapF), cells form large clumps during liquid growth, make large amounts of biofilm and produce amyloid fibrils. The protein is Functional amyloid chaperone FapA of Pseudomonas aeruginosa (strain ATCC 15692 / DSM 22644 / CIP 104116 / JCM 14847 / LMG 12228 / 1C / PRS 101 / PAO1).